The following is a 280-amino-acid chain: 4-diphosphocytidyl-2-C-methyl-D-erythritol kinase (280 aa).

Residue K8 is part of the active site. An ATP-binding site is contributed by 91–101 (PVAAGLAGGSS). D133 is an active-site residue.

The protein belongs to the GHMP kinase family. IspE subfamily.

It catalyses the reaction 4-CDP-2-C-methyl-D-erythritol + ATP = 4-CDP-2-C-methyl-D-erythritol 2-phosphate + ADP + H(+). Its pathway is isoprenoid biosynthesis; isopentenyl diphosphate biosynthesis via DXP pathway; isopentenyl diphosphate from 1-deoxy-D-xylulose 5-phosphate: step 3/6. Functionally, catalyzes the phosphorylation of the position 2 hydroxy group of 4-diphosphocytidyl-2C-methyl-D-erythritol. The protein is 4-diphosphocytidyl-2-C-methyl-D-erythritol kinase of Clostridium kluyveri (strain NBRC 12016).